The chain runs to 70 residues: Large ribosomal subunit protein uL29 (70 aa).

It belongs to the universal ribosomal protein uL29 family.

This is Large ribosomal subunit protein uL29 from Clostridium botulinum (strain ATCC 19397 / Type A).